The following is a 525-amino-acid chain: Arylsulfatase G (525 aa).

Positions 1–16 are cleaved as a signal peptide; the sequence is MGWLFLKVLLVGMAFS. Positions 44, 45, and 84 each coordinate Ca(2+). Cys-84 acts as the Nucleophile in catalysis. Residue Cys-84 is modified to 3-oxoalanine (Cys). An N-linked (GlcNAc...) asparagine glycan is attached at Asn-117. A substrate-binding site is contributed by Lys-137. His-139 is a catalytic residue. A substrate-binding site is contributed by Ser-162. A glycan (N-linked (GlcNAc...) asparagine) is linked at Asn-215. Residue His-251 coordinates substrate. Ca(2+)-binding residues include Asp-302 and Asn-303. Asn-356 and Asn-497 each carry an N-linked (GlcNAc...) asparagine glycan.

Belongs to the sulfatase family. It depends on Ca(2+) as a cofactor. N-glycosylated with both high mannose and complex type sugars. Post-translationally, the conversion to 3-oxoalanine (also known as C-formylglycine, FGly), of a serine or cysteine residue in prokaryotes and of a cysteine residue in eukaryotes, is critical for catalytic activity. In terms of processing, the 63-kDa precursor undergoes proteolytic processing in two steps, yielding two fragments in the first step (apparent molecular masses of 44 and 18 kDa). In the second step, the 44-kDa fragment is processed further to the 34- and 10-kDa chains. The 10-kDa chain is a cleavage product of the 44-kDa fragment but linked to the 18-kDa chain through a disulfide bridge. Highly expressed in the spleen, kidney, liver, brain, and testis (at protein level).

Its subcellular location is the lysosome. The enzyme catalyses an aryl sulfate + H2O = a phenol + sulfate + H(+). It catalyses the reaction Hydrolysis of the 3-sulfate groups of the N-sulfo-D-glucosamine 3-O-sulfate units of heparin.. Displays arylsulfatase activity at acidic pH towards the artificial substrate p-nitrocatechol sulfate. Catalyzes the hydrolysis of the 3-sulfate groups of the N-sulfo-D-glucosamine 3-O-sulfate units of heparin. This Mus musculus (Mouse) protein is Arylsulfatase G (Arsg).